The primary structure comprises 78 residues: Defensin-like protein 281 (78 aa).

Residues 1-23 (MASTKYLVLLFICLSVLLTPGLG) form the signal peptide. 3 disulfides stabilise this stretch: cysteine 37–cysteine 60, cysteine 46–cysteine 72, and cysteine 50–cysteine 74.

Belongs to the DEFL family.

Its subcellular location is the secreted. This chain is Defensin-like protein 281, found in Arabidopsis thaliana (Mouse-ear cress).